The following is a 200-amino-acid chain: Elongation factor Ts (200 aa).

The interval 83–86 is involved in Mg(2+) ion dislocation from EF-Tu; sequence TDFA.

The protein belongs to the EF-Ts family.

It is found in the cytoplasm. Associates with the EF-Tu.GDP complex and induces the exchange of GDP to GTP. It remains bound to the aminoacyl-tRNA.EF-Tu.GTP complex up to the GTP hydrolysis stage on the ribosome. The chain is Elongation factor Ts from Syntrophobacter fumaroxidans (strain DSM 10017 / MPOB).